The sequence spans 115 residues: Putative membrane protein insertion efficiency factor (115 aa).

The interval 81 to 115 (DPRPGRCGCKDAGPAVSAGSTEGNPGRRTDGTDPD) is disordered. A compositionally biased stretch (basic and acidic residues) spans 105–115 (PGRRTDGTDPD).

The protein belongs to the UPF0161 family.

The protein localises to the cell inner membrane. Functionally, could be involved in insertion of integral membrane proteins into the membrane. This is Putative membrane protein insertion efficiency factor from Rhodospirillum rubrum (strain ATCC 11170 / ATH 1.1.1 / DSM 467 / LMG 4362 / NCIMB 8255 / S1).